The following is a 321-amino-acid chain: Lambda-crystallin homolog (321 aa).

Serine 6 carries the post-translational modification Phosphoserine. NAD(+)-binding positions include 19–20 (LI), aspartate 39, glutamate 100, and lysine 105.

This sequence belongs to the 3-hydroxyacyl-CoA dehydrogenase family. As to quaternary structure, homodimer.

Its subcellular location is the cytoplasm. The enzyme catalyses L-gulonate + NAD(+) = 3-dehydro-L-gulonate + NADH + H(+). With respect to regulation, inhibited by malonate. Its function is as follows. Has high L-gulonate 3-dehydrogenase activity. It also exhibits low dehydrogenase activity toward L-3-hydroxybutyrate (HBA) and L-threonate. This Bos taurus (Bovine) protein is Lambda-crystallin homolog (CRYL1).